Consider the following 370-residue polypeptide: tRNA 2-selenouridine synthase (370 aa).

The 125-residue stretch at F12 to Q136 folds into the Rhodanese domain. C95 serves as the catalytic S-selanylcysteine intermediate.

Belongs to the SelU family. Monomer.

The enzyme catalyses 5-methylaminomethyl-2-thiouridine(34) in tRNA + selenophosphate + (2E)-geranyl diphosphate + H2O + H(+) = 5-methylaminomethyl-2-selenouridine(34) in tRNA + (2E)-thiogeraniol + phosphate + diphosphate. It carries out the reaction 5-methylaminomethyl-2-thiouridine(34) in tRNA + (2E)-geranyl diphosphate = 5-methylaminomethyl-S-(2E)-geranyl-thiouridine(34) in tRNA + diphosphate. The catalysed reaction is 5-methylaminomethyl-S-(2E)-geranyl-thiouridine(34) in tRNA + selenophosphate + H(+) = 5-methylaminomethyl-2-(Se-phospho)selenouridine(34) in tRNA + (2E)-thiogeraniol. It catalyses the reaction 5-methylaminomethyl-2-(Se-phospho)selenouridine(34) in tRNA + H2O = 5-methylaminomethyl-2-selenouridine(34) in tRNA + phosphate. Functionally, involved in the post-transcriptional modification of the uridine at the wobble position (U34) of tRNA(Lys), tRNA(Glu) and tRNA(Gln). Catalyzes the conversion of 2-thiouridine (S2U-RNA) to 2-selenouridine (Se2U-RNA). Acts in a two-step process involving geranylation of 2-thiouridine (S2U) to S-geranyl-2-thiouridine (geS2U) and subsequent selenation of the latter derivative to 2-selenouridine (Se2U) in the tRNA chain. This Pseudomonas putida (strain GB-1) protein is tRNA 2-selenouridine synthase.